We begin with the raw amino-acid sequence, 220 residues long: Phosphatidylserine decarboxylase proenzyme (220 aa).

The active-site Schiff-base intermediate with substrate; via pyruvic acid is the Ser-189. Ser-189 bears the Pyruvic acid (Ser); by autocatalysis mark.

Belongs to the phosphatidylserine decarboxylase family. PSD-A subfamily. As to quaternary structure, heterodimer of a large membrane-associated beta subunit and a small pyruvoyl-containing alpha subunit. It depends on pyruvate as a cofactor. Is synthesized initially as an inactive proenzyme. Formation of the active enzyme involves a self-maturation process in which the active site pyruvoyl group is generated from an internal serine residue via an autocatalytic post-translational modification. Two non-identical subunits are generated from the proenzyme in this reaction, and the pyruvate is formed at the N-terminus of the alpha chain, which is derived from the carboxyl end of the proenzyme. The post-translation cleavage follows an unusual pathway, termed non-hydrolytic serinolysis, in which the side chain hydroxyl group of the serine supplies its oxygen atom to form the C-terminus of the beta chain, while the remainder of the serine residue undergoes an oxidative deamination to produce ammonia and the pyruvoyl prosthetic group on the alpha chain.

The protein localises to the cell membrane. It carries out the reaction a 1,2-diacyl-sn-glycero-3-phospho-L-serine + H(+) = a 1,2-diacyl-sn-glycero-3-phosphoethanolamine + CO2. It functions in the pathway phospholipid metabolism; phosphatidylethanolamine biosynthesis; phosphatidylethanolamine from CDP-diacylglycerol: step 2/2. Its function is as follows. Catalyzes the formation of phosphatidylethanolamine (PtdEtn) from phosphatidylserine (PtdSer). In Pelobacter propionicus (strain DSM 2379 / NBRC 103807 / OttBd1), this protein is Phosphatidylserine decarboxylase proenzyme.